A 54-amino-acid chain; its full sequence is Rubredoxin (54 aa).

The 54-residue stretch at 1-54 (MKKYQCIVCGWIYDEAEGWPQDGIAPGTKWEDIPDDWTCPDCGVSKVDFEMIEV) folds into the Rubredoxin-like domain. Fe cation is bound by residues C6, C9, C39, and C42.

It belongs to the rubredoxin family. Fe(3+) serves as cofactor.

Its subcellular location is the cytoplasm. Its pathway is hydrocarbon metabolism; alkane degradation. In terms of biological role, involved in the hydrocarbon hydroxylating system, which transfers electrons from NADH to rubredoxin reductase and then through rubredoxin to alkane 1 monooxygenase. The polypeptide is Rubredoxin (rubA) (Acinetobacter baylyi (strain ATCC 33305 / BD413 / ADP1)).